Consider the following 112-residue polypeptide: MEITITSQTENVLLNRKEIGFSITFTGATPSRKMVHAKLAAMLSAPKDQLVIGSLHNRFGLTEITGDARVYTSAEYLKKIEPEYIRKRGMAGEEEGNADAQDAPSGDAAEAS.

The segment at 88–112 (RGMAGEEEGNADAQDAPSGDAAEAS) is disordered.

Belongs to the eukaryotic ribosomal protein eS24 family.

This chain is Small ribosomal subunit protein eS24, found in Methanospirillum hungatei JF-1 (strain ATCC 27890 / DSM 864 / NBRC 100397 / JF-1).